We begin with the raw amino-acid sequence, 173 residues long: Crossover junction endodeoxyribonuclease RuvC (173 aa).

Catalysis depends on residues D8, E67, and D139. D8, E67, and D139 together coordinate Mg(2+).

It belongs to the RuvC family. Homodimer which binds Holliday junction (HJ) DNA. The HJ becomes 2-fold symmetrical on binding to RuvC with unstacked arms; it has a different conformation from HJ DNA in complex with RuvA. In the full resolvosome a probable DNA-RuvA(4)-RuvB(12)-RuvC(2) complex forms which resolves the HJ. It depends on Mg(2+) as a cofactor.

It localises to the cytoplasm. The catalysed reaction is Endonucleolytic cleavage at a junction such as a reciprocal single-stranded crossover between two homologous DNA duplexes (Holliday junction).. Functionally, the RuvA-RuvB-RuvC complex processes Holliday junction (HJ) DNA during genetic recombination and DNA repair. Endonuclease that resolves HJ intermediates. Cleaves cruciform DNA by making single-stranded nicks across the HJ at symmetrical positions within the homologous arms, yielding a 5'-phosphate and a 3'-hydroxyl group; requires a central core of homology in the junction. The consensus cleavage sequence is 5'-(A/T)TT(C/G)-3'. Cleavage occurs on the 3'-side of the TT dinucleotide at the point of strand exchange. HJ branch migration catalyzed by RuvA-RuvB allows RuvC to scan DNA until it finds its consensus sequence, where it cleaves and resolves the cruciform DNA. The protein is Crossover junction endodeoxyribonuclease RuvC of Yersinia enterocolitica serotype O:8 / biotype 1B (strain NCTC 13174 / 8081).